We begin with the raw amino-acid sequence, 189 residues long: dCTP deaminase (189 aa).

Residues 112 to 117, 136 to 138, Gln-157, Tyr-171, and Gln-181 each bind dCTP; these read KSTYAR and TLE. The active-site Proton donor/acceptor is the Glu-138.

Belongs to the dCTP deaminase family. As to quaternary structure, homotrimer.

It catalyses the reaction dCTP + H2O + H(+) = dUTP + NH4(+). It participates in pyrimidine metabolism; dUMP biosynthesis; dUMP from dCTP (dUTP route): step 1/2. Functionally, catalyzes the deamination of dCTP to dUTP. This is dCTP deaminase from Burkholderia orbicola (strain MC0-3).